The following is a 273-amino-acid chain: Lactose transport system permease protein LacG (273 aa).

6 helical membrane-spanning segments follow: residues 15 to 35 (YSVLSLAAFLSIFPFIWMVIG), 77 to 97 (IALVGTALTLLVSSLAGYGFE), 110 to 130 (VILLTLMVPFAALMIPLFMLM), 134 to 154 (GLLNTHIAIMLPMIASAFIIF), 182 to 204 (FFYIYVPVMRSTYAAAFVIVFML), and 240 to 260 (GTVMIGTILATLPTLLVFFAM). The ABC transmembrane type-1 domain occupies 71-260 (FWNSVKIALV…LPTLLVFFAM (190 aa)).

This sequence belongs to the binding-protein-dependent transport system permease family. MalFG subfamily.

Its subcellular location is the cell inner membrane. Part of the binding-protein-dependent transport system for lactose. Probably responsible for the translocation of the substrate across the membrane. In Rhizobium radiobacter (Agrobacterium tumefaciens), this protein is Lactose transport system permease protein LacG (lacG).